A 323-amino-acid chain; its full sequence is Lipid A biosynthesis acyltransferase 1 (323 aa).

The chain crosses the membrane as a helical span at residues tyrosine 23 to phenylalanine 43. The HXXXXD motif motif lies at histidine 139 to aspartate 144.

This sequence belongs to the LpxL/LpxM/LpxP family. LpxM subfamily.

The protein resides in the cell inner membrane. The enzyme catalyses an alpha-Kdo-(2-&gt;4)-alpha-Kdo-(2-&gt;6)-(acyl)-lipid IVA + a fatty acyl-[ACP] = an alpha-Kdo-(2-&gt;4)-alpha-Kdo-(2-&gt;6)-lipid A + holo-[ACP]. The protein operates within glycolipid biosynthesis; KDO(2)-lipid A biosynthesis; KDO(2)-lipid A from CMP-3-deoxy-D-manno-octulosonate and lipid IV(A): step 4/4. Its pathway is bacterial outer membrane biogenesis; lipopolysaccharide biosynthesis. In terms of biological role, catalyzes the transfer of an acyl chain from an acyl-[acyl-carrier-protein] (ACP) to a Kdo(2)-(acyl)-lipid IV(A) to form a Kdo(2)-lipid A. The chain is Lipid A biosynthesis acyltransferase 1 from Shigella flexneri.